Reading from the N-terminus, the 121-residue chain is UPF0102 protein BDI_2565 (121 aa).

The protein belongs to the UPF0102 family.

In Parabacteroides distasonis (strain ATCC 8503 / DSM 20701 / CIP 104284 / JCM 5825 / NCTC 11152), this protein is UPF0102 protein BDI_2565.